The chain runs to 292 residues: F-box protein SKIP28 (292 aa).

In terms of domain architecture, F-box; degenerate spans 21 to 79 (LIVLPYLHSLFELLSMIRVSRSLRDAIRDETALWTKLVIEPPLSSRLTDDILSEFSSKS).

As to quaternary structure, part of a SCF (ASK-cullin-F-box) protein ligase complex. Interacts with SKP1A/ASK1 and CUL1.

It functions in the pathway protein modification; protein ubiquitination. Component of SCF(ASK-cullin-F-box) E3 ubiquitin ligase complexes, which may mediate the ubiquitination and subsequent proteasomal degradation of target proteins. Required during the endosperm development in embryos. In Arabidopsis thaliana (Mouse-ear cress), this protein is F-box protein SKIP28 (SKIP28).